The primary structure comprises 156 residues: ATP synthase subunit b', chloroplastic (156 aa).

The helical transmembrane segment at 24–44 (ATLPLVAIQFILLMVTLNIIL) threads the bilayer.

The protein belongs to the ATPase B chain family. In terms of assembly, F-type ATPases have 2 components, F(1) - the catalytic core - and F(0) - the membrane proton channel. F(1) has five subunits: alpha(3), beta(3), gamma(1), delta(1), epsilon(1). F(0) has four main subunits: a(1), b(1), b'(1) and c(10-14). The alpha and beta chains form an alternating ring which encloses part of the gamma chain. F(1) is attached to F(0) by a central stalk formed by the gamma and epsilon chains, while a peripheral stalk is formed by the delta, b and b' chains.

It is found in the plastid. The protein localises to the chloroplast thylakoid membrane. In terms of biological role, f(1)F(0) ATP synthase produces ATP from ADP in the presence of a proton or sodium gradient. F-type ATPases consist of two structural domains, F(1) containing the extramembraneous catalytic core and F(0) containing the membrane proton channel, linked together by a central stalk and a peripheral stalk. During catalysis, ATP synthesis in the catalytic domain of F(1) is coupled via a rotary mechanism of the central stalk subunits to proton translocation. Its function is as follows. Component of the F(0) channel, it forms part of the peripheral stalk, linking F(1) to F(0). The b'-subunit is a diverged and duplicated form of b found in plants and photosynthetic bacteria. The sequence is that of ATP synthase subunit b', chloroplastic from Thalassiosira pseudonana (Marine diatom).